Reading from the N-terminus, the 98-residue chain is Large ribosomal subunit protein uL23 (98 aa).

It belongs to the universal ribosomal protein uL23 family. Part of the 50S ribosomal subunit. Contacts protein L29, and trigger factor when it is bound to the ribosome.

Functionally, one of the early assembly proteins it binds 23S rRNA. One of the proteins that surrounds the polypeptide exit tunnel on the outside of the ribosome. Forms the main docking site for trigger factor binding to the ribosome. The polypeptide is Large ribosomal subunit protein uL23 (Rickettsia africae (strain ESF-5)).